We begin with the raw amino-acid sequence, 533 residues long: Peptide chain release factor 3 (533 aa).

In terms of domain architecture, tr-type G spans 10–278 (EKRRTFAIIS…TFVEIAPPPQ (269 aa)). GTP-binding positions include 19-26 (SHPDAGKT), 87-91 (DTPGH), and 141-144 (NKMD).

It belongs to the TRAFAC class translation factor GTPase superfamily. Classic translation factor GTPase family. PrfC subfamily.

Its subcellular location is the cytoplasm. Functionally, increases the formation of ribosomal termination complexes and stimulates activities of RF-1 and RF-2. It binds guanine nucleotides and has strong preference for UGA stop codons. It may interact directly with the ribosome. The stimulation of RF-1 and RF-2 is significantly reduced by GTP and GDP, but not by GMP. The chain is Peptide chain release factor 3 from Salinibacter ruber (strain DSM 13855 / M31).